The primary structure comprises 220 residues: Ribosomal RNA large subunit methyltransferase E (220 aa).

S-adenosyl-L-methionine contacts are provided by G60, W62, D92, D108, and D133. The Proton acceptor role is filled by K173. Residues 197-220 (RKPKASRDKSSETFILGRQLKQPR) are disordered.

The protein belongs to the class I-like SAM-binding methyltransferase superfamily. RNA methyltransferase RlmE family.

The protein resides in the cytoplasm. The enzyme catalyses uridine(2552) in 23S rRNA + S-adenosyl-L-methionine = 2'-O-methyluridine(2552) in 23S rRNA + S-adenosyl-L-homocysteine + H(+). In terms of biological role, specifically methylates the uridine in position 2552 of 23S rRNA at the 2'-O position of the ribose in the fully assembled 50S ribosomal subunit. The polypeptide is Ribosomal RNA large subunit methyltransferase E (Burkholderia ambifaria (strain MC40-6)).